We begin with the raw amino-acid sequence, 235 residues long: Phosphate-specific transport system accessory protein PhoU homolog 2 (235 aa).

This sequence belongs to the PhoU family. Homodimer.

It localises to the cytoplasm. Its function is as follows. Plays a role in the regulation of phosphate uptake. In Thermotoga maritima (strain ATCC 43589 / DSM 3109 / JCM 10099 / NBRC 100826 / MSB8), this protein is Phosphate-specific transport system accessory protein PhoU homolog 2 (phoU2).